A 484-amino-acid polypeptide reads, in one-letter code: Monocarboxylate transporter 2 (484 aa).

Topologically, residues 1–16 are cytoplasmic; it reads MPAPTAVPPPHPLPPD. A helical transmembrane segment spans residues 17–37; sequence GGWGWVVVGASFISIGFSYAF. The Extracellular segment spans residues 38–60; it reads PKSVTVFFKDIQEIFRAGHSKVA. A helical membrane pass occupies residues 61–81; the sequence is WISSIMLAVMYAGGPISSVLV. At 82–87 the chain is on the cytoplasmic side; sequence NKYGSR. Residues 88–108 traverse the membrane as a helical segment; it reads PVVVIGGLLCCTGMILASFST. The Extracellular portion of the chain corresponds to 109–116; that stretch reads SMIQLYLT. The helical transmembrane segment at 117-137 threads the bilayer; it reads IGFISGLGLAFNLQPALTILG. The Cytoplasmic segment spans residues 138–144; that stretch reads KYFYRRR. The chain crosses the membrane as a helical span at residues 145 to 165; sequence PLASGLAMTGSPVFLSSLAPF. The Extracellular segment spans residues 166–174; that stretch reads NQYLFNSYG. The chain crosses the membrane as a helical span at residues 175–195; sequence LKGSFLILGGIFLHSCVAGSL. The Cytoplasmic portion of the chain corresponds to 196–245; sequence MRPVGTSQQSPKSKSKVSSRHDSSTKKAPKLTLAQRINMFLDFSLFKHRG. Positions 198–223 are disordered; the sequence is PVGTSQQSPKSKSKVSSRHDSSTKKA. Residues 246–266 form a helical membrane-spanning segment; it reads FLIYLSGNVIMFLGFFAPVIF. The Extracellular portion of the chain corresponds to 267-281; it reads LSPYAKNRGVDDYKA. A helical transmembrane segment spans residues 282–302; that stretch reads AYLLSVMAFVDMFSRPCGGLI. Topologically, residues 303-311 are cytoplasmic; sequence ANTRLVRPR. A helical membrane pass occupies residues 312–332; that stretch reads IQYFFSLAIVFTGVCHLLCPL. The Extracellular segment spans residues 333-337; it reads AESYT. A helical membrane pass occupies residues 338 to 358; it reads ALVVYAIFFGYGFGSVSSILF. The Cytoplasmic segment spans residues 359 to 372; the sequence is ETLMDLVGPARFSS. Residues 373-393 traverse the membrane as a helical segment; that stretch reads AVGLVTIVECCPVLLGPPLAG. Topologically, residues 394–405 are extracellular; sequence KLVDETGEHKYL. Residues 406–426 form a helical membrane-spanning segment; that stretch reads FVASGAIVVLAGIWLFIGNAI. At 427–484 the chain is on the cytoplasmic side; that stretch reads NYRLLAKERKREKARKKKSPNRHSKELESLSKSNQDDVAVRVPQAHRSPSDKERESNI. The tract at residues 437-484 is disordered; it reads REKARKKKSPNRHSKELESLSKSNQDDVAVRVPQAHRSPSDKERESNI. Over residues 438-448 the composition is skewed to basic residues; it reads EKARKKKSPNR. 2 stretches are compositionally biased toward basic and acidic residues: residues 449–465 and 474–484; these read HSKE…DDVA and SPSDKERESNI.

Belongs to the major facilitator superfamily. Monocarboxylate porter (TC 2.A.1.13) family. Homodimer. Interacts with GRID2IP. Interacts with EMB; interaction mediates SLC16A7 targeting to the plasma membrane. Interacts with isoform 2 of BSG.

The protein localises to the cell membrane. It is found in the basolateral cell membrane. The protein resides in the cytoplasm. The enzyme catalyses 3-methyl-2-oxobutanoate(out) + H(+)(out) = 3-methyl-2-oxobutanoate(in) + H(+)(in). It catalyses the reaction (S)-lactate(in) + H(+)(in) = (S)-lactate(out) + H(+)(out). The catalysed reaction is acetoacetate(out) + H(+)(out) = acetoacetate(in) + H(+)(in). It carries out the reaction (R)-3-hydroxybutanoate(out) + H(+)(out) = (R)-3-hydroxybutanoate(in) + H(+)(in). The enzyme catalyses 4-methyl-2-oxopentanoate(out) + H(+)(out) = 4-methyl-2-oxopentanoate(in) + H(+)(in). It catalyses the reaction pyruvate(out) + H(+)(out) = pyruvate(in) + H(+)(in). The catalysed reaction is (S)-3-hydroxybutanoate(out) + H(+)(out) = (S)-3-hydroxybutanoate(in) + H(+)(in). Transport activity exhibits steep dependence on substrate concentration. Substrate concentration sensitivity of SLC16A7 arises from the strong inter-subunit cooperativity of the SLC16A7 dimer during transport. Inhibited by AR-C155858. Its function is as follows. Proton-coupled monocarboxylate symporter. Catalyzes the rapid transport across the plasma membrane of monocarboxylates such as L-lactate, pyruvate and ketone bodies, acetoacetate, beta-hydroxybutyrate and acetate. Dimerization is functionally required and both subunits work cooperatively in transporting substrate. The protein is Monocarboxylate transporter 2 (SLC16A7) of Meriones unguiculatus (Mongolian jird).